Reading from the N-terminus, the 100-residue chain is uncharacterized protein (100 aa).

As to quaternary structure, may interact with ribosomes.

This is an uncharacterized protein from Saccharomyces cerevisiae (strain ATCC 204508 / S288c) (Baker's yeast).